The sequence spans 273 residues: Formamidopyrimidine-DNA glycosylase (273 aa).

Pro-2 acts as the Schiff-base intermediate with DNA in catalysis. Glu-3 serves as the catalytic Proton donor. Lys-58 (proton donor; for beta-elimination activity) is an active-site residue. Residues His-92, Arg-111, and Lys-153 each contribute to the DNA site. The segment at 238–272 (KVYGREGQSCLSCSSTIIKIKHSGRSTFYCKTCQY) adopts an FPG-type zinc-finger fold. The Proton donor; for delta-elimination activity role is filled by Arg-262.

It belongs to the FPG family. In terms of assembly, monomer. Zn(2+) serves as cofactor.

It carries out the reaction Hydrolysis of DNA containing ring-opened 7-methylguanine residues, releasing 2,6-diamino-4-hydroxy-5-(N-methyl)formamidopyrimidine.. The enzyme catalyses 2'-deoxyribonucleotide-(2'-deoxyribose 5'-phosphate)-2'-deoxyribonucleotide-DNA = a 3'-end 2'-deoxyribonucleotide-(2,3-dehydro-2,3-deoxyribose 5'-phosphate)-DNA + a 5'-end 5'-phospho-2'-deoxyribonucleoside-DNA + H(+). Its function is as follows. Involved in base excision repair of DNA damaged by oxidation or by mutagenic agents. Acts as a DNA glycosylase that recognizes and removes damaged bases. Has a preference for oxidized purines, such as 7,8-dihydro-8-oxoguanine (8-oxoG). Has AP (apurinic/apyrimidinic) lyase activity and introduces nicks in the DNA strand. Cleaves the DNA backbone by beta-delta elimination to generate a single-strand break at the site of the removed base with both 3'- and 5'-phosphates. The sequence is that of Formamidopyrimidine-DNA glycosylase from Rickettsia conorii (strain ATCC VR-613 / Malish 7).